Reading from the N-terminus, the 411-residue chain is Pre-mRNA-splicing factor dre4 (411 aa).

One can recognise a WW 1 domain in the interval 3 to 36 (QPLPPGWTEHKAPSGIPYYWNAELKKSTYQRPSF). A disordered region spans residues 65-84 (NAEERKNSRDLRKQLPDRPK). The segment covering 66-83 (AEERKNSRDLRKQLPDRP) has biased composition (basic and acidic residues). The 34-residue stretch at 89–122 (IPNNDSWVVVFTKKNRYFFHNLKSHESYWEPPLE) folds into the WW 2 domain. The disordered stretch occupies residues 138 to 209 (ISKDSSQSQN…KSHSAEELEF (72 aa)). A compositionally biased stretch (polar residues) spans 140–151 (KDSSQSQNVDSG). The span at 152 to 166 (KTNHEEIHESRHLQT) shows a compositional bias: basic and acidic residues. Residues 167–179 (EIEEPSGLEESSE) are compositionally biased toward acidic residues. An FF domain is found at 239-293 (TDDARRVFTELLKDKNIGAYQPWELVYPKLLDDDRFYVLDSGERRKEVFEEYCKS).

Component of the spliceosomal complex. Interacts with prp19.

The protein resides in the nucleus. In terms of biological role, component of the spliceosome involved in mRNA processing. The sequence is that of Pre-mRNA-splicing factor dre4 (dre4) from Schizosaccharomyces pombe (strain 972 / ATCC 24843) (Fission yeast).